The primary structure comprises 300 residues: Bifunctional protein FolD 2 (300 aa).

NADP(+)-binding positions include 165–167 (GRS), serine 190, and isoleucine 231.

It belongs to the tetrahydrofolate dehydrogenase/cyclohydrolase family. As to quaternary structure, homodimer.

The enzyme catalyses (6R)-5,10-methylene-5,6,7,8-tetrahydrofolate + NADP(+) = (6R)-5,10-methenyltetrahydrofolate + NADPH. The catalysed reaction is (6R)-5,10-methenyltetrahydrofolate + H2O = (6R)-10-formyltetrahydrofolate + H(+). It participates in one-carbon metabolism; tetrahydrofolate interconversion. In terms of biological role, catalyzes the oxidation of 5,10-methylenetetrahydrofolate to 5,10-methenyltetrahydrofolate and then the hydrolysis of 5,10-methenyltetrahydrofolate to 10-formyltetrahydrofolate. This Pseudomonas savastanoi pv. phaseolicola (strain 1448A / Race 6) (Pseudomonas syringae pv. phaseolicola (strain 1448A / Race 6)) protein is Bifunctional protein FolD 2.